Reading from the N-terminus, the 98-residue chain is Co-chaperonin GroES (98 aa).

The tract at residues 32 to 56 (NAKEKPQQGEVLAVGPGRRDDEGKR) is disordered.

Belongs to the GroES chaperonin family. In terms of assembly, heptamer of 7 subunits arranged in a ring. Interacts with the chaperonin GroEL.

It localises to the cytoplasm. In terms of biological role, together with the chaperonin GroEL, plays an essential role in assisting protein folding. The GroEL-GroES system forms a nano-cage that allows encapsulation of the non-native substrate proteins and provides a physical environment optimized to promote and accelerate protein folding. GroES binds to the apical surface of the GroEL ring, thereby capping the opening of the GroEL channel. This Bifidobacterium animalis subsp. lactis (strain AD011) protein is Co-chaperonin GroES.